The chain runs to 421 residues: MSEIVVEGGRKLIGEVPISGSKNAALPILAAAVMIDEPVVLDNVPELKDVFTMLTILQRIGKKVSFRDNRVVVEPGNVLMGDVPYELVRMMRASFNVLGPLTMVCGWAKVGKPGGCNIGQRPVDFHIEGLKALGFLIKEEHGDVIAKKPSSFKEELYYKLPFPSVGATEQLMTVAALMSESKTIIENVAREPEIQDLQNFLNKAGAKIKGAGTDRIEIEGVEKLHGIEYHIIPDRIEAGTYLLAGVSTRGRVKVSNVIPEHLEALLKVLDELGVSITCDKNSIEVSVSGELKPIRVSTAPYPGFPTDLQPMLTAVLCTVPGESIIEEKVFENRFGYVDEMNRMSANIKVMNRVAHIVGVEKLSGAQIYAPDIRATAGMLIAALSAEGQTVIKNAAHIFRGYEKLKEKFTTIGAQIEVYPEE.

Residue Lys-22–Asn-23 participates in phosphoenolpyruvate binding. Arg-92 is a UDP-N-acetyl-alpha-D-glucosamine binding site. The active-site Proton donor is the Cys-116. Cys-116 bears the 2-(S-cysteinyl)pyruvic acid O-phosphothioketal mark. Asp-307 and Val-329 together coordinate UDP-N-acetyl-alpha-D-glucosamine.

The protein belongs to the EPSP synthase family. MurA subfamily.

The protein resides in the cytoplasm. The catalysed reaction is phosphoenolpyruvate + UDP-N-acetyl-alpha-D-glucosamine = UDP-N-acetyl-3-O-(1-carboxyvinyl)-alpha-D-glucosamine + phosphate. The protein operates within cell wall biogenesis; peptidoglycan biosynthesis. In terms of biological role, cell wall formation. Adds enolpyruvyl to UDP-N-acetylglucosamine. In Kosmotoga olearia (strain ATCC BAA-1733 / DSM 21960 / TBF 19.5.1), this protein is UDP-N-acetylglucosamine 1-carboxyvinyltransferase.